Here is a 317-residue protein sequence, read N- to C-terminus: Tyrosine--tRNA ligase (317 aa).

Position 32 (Y32) interacts with L-tyrosine. The 'HIGH' region signature appears at 37 to 45 (PSGEIHLGH). L-tyrosine is bound by residues Y152, Q156, D159, and Q174. The short motif at 208–212 (KMSSS) is the 'KMSKS' region element. Position 211 (S211) interacts with ATP.

Belongs to the class-I aminoacyl-tRNA synthetase family. TyrS type 3 subfamily. Homodimer.

The protein localises to the cytoplasm. It carries out the reaction tRNA(Tyr) + L-tyrosine + ATP = L-tyrosyl-tRNA(Tyr) + AMP + diphosphate + H(+). Its function is as follows. Catalyzes the attachment of tyrosine to tRNA(Tyr) in a two-step reaction: tyrosine is first activated by ATP to form Tyr-AMP and then transferred to the acceptor end of tRNA(Tyr). In Methanocorpusculum labreanum (strain ATCC 43576 / DSM 4855 / Z), this protein is Tyrosine--tRNA ligase.